The sequence spans 145 residues: Large ribosomal subunit protein bL19 (145 aa).

This sequence belongs to the bacterial ribosomal protein bL19 family.

In terms of biological role, this protein is located at the 30S-50S ribosomal subunit interface and may play a role in the structure and function of the aminoacyl-tRNA binding site. In Brucella abortus (strain S19), this protein is Large ribosomal subunit protein bL19.